A 120-amino-acid chain; its full sequence is Piercer of microtubule wall 2 protein (120 aa).

The segment covering 1-10 (MTECDWEKKS) has biased composition (basic and acidic residues). The tract at residues 1 to 25 (MTECDWEKKSTSASNSDTEMKPELP) is disordered.

Belongs to the PIERCE2 family. Microtubule inner protein component of sperm flagellar doublet microtubules. Interacts with CFAP53, ODAD1 and ODAD3; the interactions link the outer dynein arms docking complex (ODA-DC) to the internal microtubule inner proteins (MIP) in cilium axoneme. As to expression, expressed in trachea multiciliated cells.

The protein resides in the cytoplasm. The protein localises to the cytoskeleton. Its subcellular location is the cilium axoneme. It localises to the flagellum axoneme. Functionally, microtubule inner protein involved in the attachment of outer dynein arms (ODAs) to dynein-decorated doublet microtubules (DMTs) in cilia axoneme, which is required for motile cilia beating. In Bos taurus (Bovine), this protein is Piercer of microtubule wall 2 protein (PIERCE2).